Reading from the N-terminus, the 365-residue chain is Geissoschizine synthase (365 aa).

C51 is a binding site for Zn(2+). Residue N52 participates in NADP(+) binding. Zn(2+) contacts are provided by H73, E74, C104, C107, C110, C118, and C169. L195, G197, L198, S217, T218, S219, K222, R262, V281, A283, S305, T307, and R352 together coordinate NADP(+).

The protein belongs to the zinc-containing alcohol dehydrogenase family. Class-III subfamily. Homodimer. The cofactor is Zn(2+). As to expression, mainly expressed in roots and, to a lower level, in leaves.

It carries out the reaction (19E)-geissoschizine + NADP(+) = 4,21-dehydrogeissoschizine + NADPH. Its pathway is alkaloid biosynthesis; ajmaline biosynthesis. Functionally, alcohol dehydrogenase involved in the biosynthesis of ajmaline-type monoterpenoid indole alkaloids (MIAs) natural products, important plant-derived pharmaceuticals used in the therapy of heart disorders. Catalyzes iminium reduction on 4,21-dehydrogeissoschizine to produce 19E-geissoschizine, precursor of vomilenine, an intermediate chemical in the biosynthesis of ajmaline. This Rauvolfia serpentina (Serpentine wood) protein is Geissoschizine synthase.